The sequence spans 1071 residues: Carbamoyl phosphate synthase large chain (1071 aa).

Residues 1-403 (MPKRTDLKSI…SFQKALRGLE (403 aa)) form a carboxyphosphate synthetic domain region. The ATP site is built by arginine 129, arginine 169, glycine 175, glycine 176, glutamine 208, valine 210, glutamate 215, glycine 241, valine 242, histidine 243, glutamine 285, and glutamate 299. The ATP-grasp 1 domain occupies 133 to 328 (KEAMEKIGLS…IAKVAAKLAV (196 aa)). Residues glutamine 285, glutamate 299, and asparagine 301 each contribute to the Mg(2+) site. Residues glutamine 285, glutamate 299, and asparagine 301 each coordinate Mn(2+). The oligomerization domain stretch occupies residues 404–548 (TGLCGFNPRS…YSTYEEECEA (145 aa)). The interval 549-930 (RPSDRKKVMI…AYYKAQLGAG (382 aa)) is carbamoyl phosphate synthetic domain. The region spanning 673–864 (QKVLNDLGLR…LAKVGARCMA (192 aa)) is the ATP-grasp 2 domain. Arginine 709, phenylalanine 748, leucine 750, glutamate 755, glycine 780, isoleucine 781, histidine 782, serine 783, glutamine 823, and glutamate 835 together coordinate ATP. Glutamine 823, glutamate 835, and asparagine 837 together coordinate Mg(2+). Residues glutamine 823, glutamate 835, and asparagine 837 each contribute to the Mn(2+) site. The MGS-like domain occupies 931-1071 (ERLNPTGKIF…ELHGRLKNRS (141 aa)). Residues 931 to 1071 (ERLNPTGKIF…ELHGRLKNRS (141 aa)) form an allosteric domain region.

The protein belongs to the CarB family. As to quaternary structure, composed of two chains; the small (or glutamine) chain promotes the hydrolysis of glutamine to ammonia, which is used by the large (or ammonia) chain to synthesize carbamoyl phosphate. Tetramer of heterodimers (alpha,beta)4. The cofactor is Mg(2+). Mn(2+) serves as cofactor.

The enzyme catalyses hydrogencarbonate + L-glutamine + 2 ATP + H2O = carbamoyl phosphate + L-glutamate + 2 ADP + phosphate + 2 H(+). It catalyses the reaction hydrogencarbonate + NH4(+) + 2 ATP = carbamoyl phosphate + 2 ADP + phosphate + 2 H(+). The protein operates within amino-acid biosynthesis; L-arginine biosynthesis; carbamoyl phosphate from bicarbonate: step 1/1. Its pathway is pyrimidine metabolism; UMP biosynthesis via de novo pathway; (S)-dihydroorotate from bicarbonate: step 1/3. Its function is as follows. Large subunit of the glutamine-dependent carbamoyl phosphate synthetase (CPSase). CPSase catalyzes the formation of carbamoyl phosphate from the ammonia moiety of glutamine, carbonate, and phosphate donated by ATP, constituting the first step of 2 biosynthetic pathways, one leading to arginine and/or urea and the other to pyrimidine nucleotides. The large subunit (synthetase) binds the substrates ammonia (free or transferred from glutamine from the small subunit), hydrogencarbonate and ATP and carries out an ATP-coupled ligase reaction, activating hydrogencarbonate by forming carboxy phosphate which reacts with ammonia to form carbamoyl phosphate. This Neisseria meningitidis serogroup A / serotype 4A (strain DSM 15465 / Z2491) protein is Carbamoyl phosphate synthase large chain.